A 155-amino-acid chain; its full sequence is Probable adenylyl-sulfate kinase (155 aa).

ATP is bound at residue Gly9–Thr16. Ser83 functions as the Phosphoserine intermediate in the catalytic mechanism. The tract at residues Leu134 to Arg155 is disordered.

This sequence belongs to the APS kinase family.

The catalysed reaction is adenosine 5'-phosphosulfate + ATP = 3'-phosphoadenylyl sulfate + ADP + H(+). The protein operates within sulfur metabolism; hydrogen sulfide biosynthesis; sulfite from sulfate: step 2/3. Functionally, catalyzes the synthesis of activated sulfate. The sequence is that of Probable adenylyl-sulfate kinase (cysC) from Archaeoglobus fulgidus (strain ATCC 49558 / DSM 4304 / JCM 9628 / NBRC 100126 / VC-16).